A 373-amino-acid chain; its full sequence is Indole glucosinolate O-methyltransferase 4 (373 aa).

S-adenosyl-L-homocysteine is bound by residues glycine 217, aspartate 240, aspartate 260, methionine 261, and lysine 274. Histidine 278 functions as the Proton acceptor in the catalytic mechanism.

The protein belongs to the class I-like SAM-binding methyltransferase superfamily. Cation-independent O-methyltransferase family. As to quaternary structure, interacts with B'GAMMA.

It functions in the pathway secondary metabolite biosynthesis. Functionally, involved in indole glucosinolate biosynthesis. Catalyzes methoxylation reactions of the glucosinolate indole ring. Converts the hydroxy intermediates 4-hydroxy-indol-3-yl-methylglucosinolate (4OH-I3M) and 1-hydroxy-indol-3-yl-methylglucosinolate (1OH-I3M) to 4-methoxy-indol-3-yl-methylglucosinolate (4MO-I3M) and 1-methoxy-indol-3-yl-methylglucosinolate(1MO-I3M), respectively. The protein is Indole glucosinolate O-methyltransferase 4 of Arabidopsis thaliana (Mouse-ear cress).